A 435-amino-acid polypeptide reads, in one-letter code: Galactomannan galactosyltransferase 1 (435 aa).

Topologically, residues 1 to 20 are cytoplasmic; it reads MAKFGSRNKSPKWISNGCCF. A helical; Signal-anchor for type II membrane protein membrane pass occupies residues 21 to 41; the sequence is LLGAFTALLLLWGLCSFIIPI. At 42 to 435 the chain is on the lumenal side; it reads PNTDPKLNSV…SPLPFGYPAA (394 aa). Residues Asn230 and Asn328 are each glycosylated (N-linked (GlcNAc...) asparagine). Residues 321 to 354 are a coiled coil; the sequence is EIVKTYENISERYDEVERKVEGLRRRHAEKVSEK.

The protein belongs to the glycosyltransferase 34 family.

It localises to the golgi apparatus membrane. Its function is as follows. Galactomannan galactosyltransferase (GMGT) involved in galactomannan biosynthesis in seed endosperm. GMGT specificity is an important factor regulating the distribution and amount of alpha-1,6-galactose (Gal) substitution of the beta-1,4-linked mannan backbone. This chain is Galactomannan galactosyltransferase 1 (GMGT1), found in Cyamopsis tetragonoloba (Guar).